The chain runs to 539 residues: MAKEIKFSEDARTKMLKGVDKLADTVKSTIGPKGRNVVLEQSYGSPTITNDGVTIAKAIELEDHFENMGAKLVSEVASKTNDIAGDGTTTATVLTQAIVNEGMKNVTAGANPVGIRRGIEKATSKAVEALHKMSHEVKTKDDIAQIASISSANPEVGKLIANAMEKVGNDGVITIEESRGVDTTLDVVEGMQFDRGYMSQYMVTDNDKMEANLDNPYILITDKKIGNIQDILPVLQSVVEQSRSLLIIADDITGEALPTLVLNKMRGTFNVVAVKAPGFGDRRKEQLEDIAILTGGTVITDDLGLNLKDVTIEQLGQSNKVTVTKDDTTIVEGAGSQEQIAERVGIIKQQISETTSDFDKEKLQERLAKLSGGVAVIRVGAATETELKEKKYRIEDALNATRAAVEEGFVPGGGTALANVISDLEDVEAEGDEATGVNIVRRALEEPVRQIAENAGEEGSVIVTKLKGQKPGVGYNAANDEWVDMVEAGIVDPTKVTRSALQNAASVSALLLTTEAVVADLPEDNPAPAAPAPGMGGMM.

ATP contacts are provided by residues 29–32 (TIGP), 86–90 (DGTTT), glycine 413, 476–478 (NAA), and aspartate 492.

The protein belongs to the chaperonin (HSP60) family. As to quaternary structure, forms a cylinder of 14 subunits composed of two heptameric rings stacked back-to-back. Interacts with the co-chaperonin GroES.

The protein resides in the cytoplasm. The catalysed reaction is ATP + H2O + a folded polypeptide = ADP + phosphate + an unfolded polypeptide.. Together with its co-chaperonin GroES, plays an essential role in assisting protein folding. The GroEL-GroES system forms a nano-cage that allows encapsulation of the non-native substrate proteins and provides a physical environment optimized to promote and accelerate protein folding. The protein is Chaperonin GroEL of Pediococcus pentosaceus (strain ATCC 25745 / CCUG 21536 / LMG 10740 / 183-1w).